Here is a 116-residue protein sequence, read N- to C-terminus: Immunoglobulin heavy variable 2-4 (116 aa).

Residues 1-19 (MAVLVLLFCLVTFPSCVLS) form the signal peptide. In terms of domain architecture, Ig-like spans 20-116 (QVQLKQSGPG…DDTAIYYCAK (97 aa)). Cysteines 41 and 114 form a disulfide.

The sequence is that of Immunoglobulin heavy variable 2-4 from Mus musculus (Mouse).